The chain runs to 349 residues: MSLANHTFSNPSRVLQRNESLFTNKNILVAGNIDDEYPLQLQALANSSTFCFSDYRYYSVLKDKLTTSEVHFTDNYQGETKFDLLLIFLPKAKQETLYLLANLTPHLQPGASIILVGEKKCGIKSADSLLASYSNRINMIDSARHCSILHAELNQPVNAFTQSQWIKTYPLNINNTELQICSLPGVFSYGELDKGSELLLQNLPDKMSGRVLDFGCGAGVIACYVLKKHPQLSVDLVDINAFALASAKLSLQSNQLEGNVFPSNVFSDIKEKYNILLSNPPFHSGKNTDYTAAETFINQSTNHLKSKGKLSIVANRFLNYEGLLFKAFSNVKIDQESNKFKVLSCITKT.

This sequence belongs to the methyltransferase superfamily. RsmC family. As to quaternary structure, monomer.

The protein localises to the cytoplasm. The enzyme catalyses guanosine(1207) in 16S rRNA + S-adenosyl-L-methionine = N(2)-methylguanosine(1207) in 16S rRNA + S-adenosyl-L-homocysteine + H(+). Its function is as follows. Specifically methylates the guanine in position 1207 of 16S rRNA in the 30S particle. This is Ribosomal RNA small subunit methyltransferase C from Psychromonas ingrahamii (strain DSM 17664 / CCUG 51855 / 37).